The following is a 559-amino-acid chain: 5'-AMP-activated protein kinase catalytic subunit alpha-1 (559 aa).

Residues 27 to 279 form the Protein kinase domain; the sequence is YILGDTLGVG…IKDIREHEWF (253 aa). Threonine 32 carries the post-translational modification Phosphothreonine. Residues 33–41 and lysine 56 each bind ATP; that span reads LGVGTFGKV. Aspartate 150 serves as the catalytic Proton acceptor. The residue at position 183 (threonine 183) is a Phosphothreonine; by LKB1 and CaMKK2. Residues threonine 269 and threonine 355 each carry the phosphothreonine modification. Positions 302–381 are AIS; it reads EALKEVCEKF…PERVPFLVAE (80 aa). Serine 356 bears the Phosphoserine mark. A Phosphoserine; by ULK1 modification is found at serine 360. Threonine 368 carries the post-translational modification Phosphothreonine; by ULK1. The residue at position 382 (threonine 382) is a Phosphothreonine. Serine 397 carries the phosphoserine; by ULK1 modification. 2 positions are modified to phosphoserine: serine 467 and serine 486. The segment at 484–536 is disordered; that stretch reads AKSGTATPQRSGSISNYRSCQRSDSDAEAQGKPSEVSLTSSVTSLDSSPVDVA. Residues 485–505 show a composition bias toward polar residues; it reads KSGTATPQRSGSISNYRSCQR. Serine 486 carries the phosphoserine; by ULK1 modification. Residue threonine 488 is modified to Phosphothreonine; by ULK1. The residue at position 490 (threonine 490) is a Phosphothreonine. Residues serine 496, serine 508, serine 524, and serine 527 each carry the phosphoserine modification. The span at 516-535 shows a compositional bias: low complexity; the sequence is PSEVSLTSSVTSLDSSPVDV.

It belongs to the protein kinase superfamily. CAMK Ser/Thr protein kinase family. SNF1 subfamily. In terms of assembly, AMPK is a heterotrimer of an alpha catalytic subunit (PRKAA1 or PRKAA2), a beta (PRKAB1 or PRKAB2) and a gamma non-catalytic subunits (PRKAG1, PRKAG2 or PRKAG3). Interacts with FNIP1 and FNIP2. Mg(2+) is required as a cofactor. Post-translationally, ubiquitinated. In terms of processing, phosphorylated at Thr-183 by STK11/LKB1 in complex with STE20-related adapter-alpha (STRADA) pseudo kinase and CAB39. Also phosphorylated at Thr-183 by CAMKK2; triggered by a rise in intracellular calcium ions, without detectable changes in the AMP/ATP ratio. CAMKK1 can also phosphorylate Thr-183, but at a much lower level. Dephosphorylated by protein phosphatase 2A and 2C (PP2A and PP2C). Phosphorylated by ULK1 and ULK2; leading to negatively regulate AMPK activity and suggesting the existence of a regulatory feedback loop between ULK1, ULK2 and AMPK. There is some ambiguity for some phosphosites: Ser-360/Thr-368 and Ser-486/Thr-488. Dephosphorylated by PPM1A and PPM1B. Glycosylated; O-GlcNAcylated by OGT, promoting the AMP-activated protein kinase (AMPK) activity. As to expression, low expression in kidney, liver, lung, heart and brain.

It is found in the cytoplasm. Its subcellular location is the nucleus. It catalyses the reaction L-seryl-[protein] + ATP = O-phospho-L-seryl-[protein] + ADP + H(+). The enzyme catalyses L-threonyl-[protein] + ATP = O-phospho-L-threonyl-[protein] + ADP + H(+). The catalysed reaction is L-seryl-[acetyl-CoA carboxylase] + ATP = O-phospho-L-seryl-[acetyl-CoA carboxylase] + ADP + H(+). It carries out the reaction L-seryl-[3-hydroxy-3-methylglutaryl-coenzyme A reductase] + ATP = O-phospho-L-seryl-[3-hydroxy-3-methylglutaryl-coenzyme A reductase] + ADP + H(+). It catalyses the reaction L-seryl-[tau protein] + ATP = O-phospho-L-seryl-[tau protein] + ADP + H(+). The enzyme catalyses L-threonyl-[tau protein] + ATP = O-phospho-L-threonyl-[tau protein] + ADP + H(+). Activated by phosphorylation on Thr-183. Binding of AMP to non-catalytic gamma subunit (PRKAG1, PRKAG2 or PRKAG3) results in allosteric activation, inducing phosphorylation on Thr-183. AMP-binding to gamma subunit also sustains activity by preventing dephosphorylation of Thr-183. ADP also stimulates Thr-183 phosphorylation, without stimulating already phosphorylated AMPK. ATP promotes dephosphorylation of Thr-183, rendering the enzyme inactive. Under physiological conditions AMPK mainly exists in its inactive form in complex with ATP, which is much more abundant than AMP. Selectively inhibited by compound C (6-[4-(2-Piperidin-1-yl-ethoxy)-phenyl)]-3-pyridin-4-yl-pyyrazolo[1,5-a] pyrimidine. Activated by resveratrol, a natural polyphenol present in red wine, and S17834, a synthetic polyphenol. Functionally, catalytic subunit of AMP-activated protein kinase (AMPK), an energy sensor protein kinase that plays a key role in regulating cellular energy metabolism. In response to reduction of intracellular ATP levels, AMPK activates energy-producing pathways and inhibits energy-consuming processes: inhibits protein, carbohydrate and lipid biosynthesis, as well as cell growth and proliferation. AMPK acts via direct phosphorylation of metabolic enzymes, and by longer-term effects via phosphorylation of transcription regulators. Regulates lipid synthesis by phosphorylating and inactivating lipid metabolic enzymes such as ACACA, ACACB, GYS1, HMGCR and LIPE; regulates fatty acid and cholesterol synthesis by phosphorylating acetyl-CoA carboxylase (ACACA and ACACB) and hormone-sensitive lipase (LIPE) enzymes, respectively. Promotes lipolysis of lipid droplets by mediating phosphorylation of isoform 1 of CHKA (CHKalpha2). Regulates insulin-signaling and glycolysis by phosphorylating IRS1, PFKFB2 and PFKFB3. AMPK stimulates glucose uptake in muscle by increasing the translocation of the glucose transporter SLC2A4/GLUT4 to the plasma membrane, possibly by mediating phosphorylation of TBC1D4/AS160. Regulates transcription and chromatin structure by phosphorylating transcription regulators involved in energy metabolism such as CRTC2/TORC2, FOXO3, histone H2B, HDAC5, MEF2C, MLXIPL/ChREBP, EP300, HNF4A, p53/TP53, SREBF1, SREBF2 and PPARGC1A. Acts as a key regulator of glucose homeostasis in liver by phosphorylating CRTC2/TORC2, leading to CRTC2/TORC2 sequestration in the cytoplasm. In response to stress, phosphorylates 'Ser-36' of histone H2B (H2BS36ph), leading to promote transcription. Acts as a key regulator of cell growth and proliferation by phosphorylating FNIP1, TSC2, RPTOR, WDR24 and ATG1/ULK1: in response to nutrient limitation, negatively regulates the mTORC1 complex by phosphorylating RPTOR component of the mTORC1 complex and by phosphorylating and activating TSC2. Also phosphorylates and inhibits GATOR2 subunit WDR24 in response to nutrient limitation, leading to suppress glucose-mediated mTORC1 activation. In response to energetic stress, phosphorylates FNIP1, inactivating the non-canonical mTORC1 signaling, thereby promoting nuclear translocation of TFEB and TFE3, and inducing transcription of lysosomal or autophagy genes. In response to nutrient limitation, promotes autophagy by phosphorylating and activating ATG1/ULK1. In that process, it also activates WDR45/WIPI4. Phosphorylates CASP6, thereby preventing its autoprocessing and subsequent activation. In response to nutrient limitation, phosphorylates transcription factor FOXO3 promoting FOXO3 mitochondrial import. Also acts as a regulator of cellular polarity by remodeling the actin cytoskeleton; probably by indirectly activating myosin. AMPK also acts as a regulator of circadian rhythm by mediating phosphorylation of CRY1, leading to destabilize it. May regulate the Wnt signaling pathway by phosphorylating CTNNB1, leading to stabilize it. Also has tau-protein kinase activity: in response to amyloid beta A4 protein (APP) exposure, activated by CAMKK2, leading to phosphorylation of MAPT/TAU; however the relevance of such data remains unclear in vivo. Also phosphorylates CFTR, EEF2K, KLC1, NOS3 and SLC12A1. Regulates hepatic lipogenesis. Activated via SIRT3, represses sterol regulatory element-binding protein (SREBP) transcriptional activities and ATP-consuming lipogenesis to restore cellular energy balance. Upon stress, regulates mitochondrial fragmentation through phosphorylation of MTFR1L. In Rattus norvegicus (Rat), this protein is 5'-AMP-activated protein kinase catalytic subunit alpha-1 (Prkaa1).